The following is a 738-amino-acid chain: LPS-assembly protein LptD (738 aa).

An N-terminal signal peptide occupies residues 1 to 26 (MEHKRNNILLAGLFFLLLGLVSIARA).

The protein belongs to the LptD family. As to quaternary structure, component of the lipopolysaccharide transport and assembly complex. Interacts with LptE and LptA.

It localises to the cell outer membrane. Its function is as follows. Together with LptE, is involved in the assembly of lipopolysaccharide (LPS) at the surface of the outer membrane. This chain is LPS-assembly protein LptD, found in Nitrosococcus oceani (strain ATCC 19707 / BCRC 17464 / JCM 30415 / NCIMB 11848 / C-107).